The following is a 102-amino-acid chain: Small ribosomal subunit protein bS18c (102 aa).

Belongs to the bacterial ribosomal protein bS18 family. Part of the 30S ribosomal subunit.

It localises to the plastid. The protein localises to the chloroplast. This is Small ribosomal subunit protein bS18c from Phaseolus vulgaris (Kidney bean).